The primary structure comprises 394 residues: Elongation factor Tu (394 aa).

Residues 10 to 204 enclose the tr-type G domain; it reads KLHINVGTIG…VLDSYIPEPK (195 aa). Residues 19-26 form a G1 region; the sequence is GHVDHGKT. 19–26 is a binding site for GTP; sequence GHVDHGKT. Thr-26 is a Mg(2+) binding site. Residues 60 to 64 are G2; it reads GITIN. Residues 81 to 84 are G3; sequence DCPG. Residues 81-85 and 136-139 each bind GTP; these read DCPGH and NKCD. Residues 136–139 form a G4 region; sequence NKCD. The segment at 174–176 is G5; it reads SAL.

Belongs to the TRAFAC class translation factor GTPase superfamily. Classic translation factor GTPase family. EF-Tu/EF-1A subfamily. In terms of assembly, monomer.

It localises to the cytoplasm. It catalyses the reaction GTP + H2O = GDP + phosphate + H(+). GTP hydrolase that promotes the GTP-dependent binding of aminoacyl-tRNA to the A-site of ribosomes during protein biosynthesis. This Baumannia cicadellinicola subsp. Homalodisca coagulata protein is Elongation factor Tu.